Here is a 383-residue protein sequence, read N- to C-terminus: Agmatine deiminase (383 aa).

Residues D220 and D226 each coordinate agmatine. The Amidino-cysteine intermediate role is filled by C366.

This sequence belongs to the agmatine deiminase family. Forms homodimers.

The enzyme catalyses agmatine + H2O = N-carbamoylputrescine + NH4(+). It functions in the pathway amine and polyamine biosynthesis; putrescine biosynthesis via agmatine pathway; N-carbamoylputrescine from agmatine: step 1/1. Inhibited by N-ethylmaleimide and iodoacetamide. Functionally, mediates the hydrolysis of agmatine into N-carbamoylputrescine in the arginine decarboxylase (ADC) pathway of putrescine biosynthesis, a basic polyamine. This is Agmatine deiminase (AIH) from Arabidopsis thaliana (Mouse-ear cress).